The sequence spans 178 residues: tRNA (cytidine(56)-2'-O)-methyltransferase (178 aa).

Residue L88 coordinates S-adenosyl-L-methionine.

This sequence belongs to the aTrm56 family. Homodimer.

It is found in the cytoplasm. The enzyme catalyses cytidine(56) in tRNA + S-adenosyl-L-methionine = 2'-O-methylcytidine(56) in tRNA + S-adenosyl-L-homocysteine + H(+). In terms of biological role, specifically catalyzes the AdoMet-dependent 2'-O-ribose methylation of cytidine at position 56 in tRNAs. The polypeptide is tRNA (cytidine(56)-2'-O)-methyltransferase (Methanopyrus kandleri (strain AV19 / DSM 6324 / JCM 9639 / NBRC 100938)).